The following is a 787-amino-acid chain: MDKEKEQTLEWNEAQKIDISVDLLAAAKKHLLFLGAVDRNRCLYDGPALQRAIYRYNAYWLPLLAQYTESSSICQGPLVPPLDCEWVWHCHRLNPVRYKTDCEQFYGRVLDNSGVVSSVNGNCKSQTETLWKRLYPTEPYDLDFANAISEPADVSALEKCTTYDLVLAVKRQSPFFYQVSRAHVDNDVFLQEAVARYKAFLYLIKGNRERSIKLFCVPTYDIDLIWHTHQLHAISYCNDLTKMIGKVLEHDDTDSDRSKGKKLDTGFSGTTAQWEETFGRRYWKAGAMNRGNTPKPVTTSPYVCSGKKSIAKEEESQNVIQYPEVKVIEVILEIVGVKNLPDAHKGKVFVLFSKTQPDSLFNAERRLTVLSESCGEKQVALFQCEPTGELSFQLMSSKSKSLGFTSLSFSEFLSPVTKLSVEKWLELTPTKRGKADDPNPISLRVAVSFTPPTRSPTVLHLVQARPSLKGSCFLPMLRKVRLAKSFTRVVDETETEVINLQMRNSNDAAPKGDRRQVIGVKECGETYVLAEYDGTFWSLLDSKWSLKQTCNPATDGPLFELSGTRMVKVYSGRKLEYEPKHCSKLRSEQDFMTAVEFSKQHPYGKAVGLLDLKFGSIEANEKWLVLPGMVSSFILSDLLKKEGFSAAAKDTVKANGITEESTEIDVLSQEKLEEETMMDVDTTTPVAVAAEKINGGARCFSKELSGNMIEEEGGHCGGCGGCGGCGGGGGCGGGGRCGGMTKIEGCGGGSCTGGSTGCGNCGGGCGNMMKNNANGNAPSVENDAVTA.

Expressed in leaves, inflorescences, buds, flowers and immature siliques.

Its function is as follows. Involved in development and stress responses, probably through an auxin-dependent mechanism. The sequence is that of Glycine-rich domain-containing protein 2 from Arabidopsis thaliana (Mouse-ear cress).